Reading from the N-terminus, the 893-residue chain is Ubiquitin-like protease 2 (893 aa).

The interval 538–800 is protease; that stretch reads PVVLLVKDIK…YNLILQQADK (263 aa). Active-site residues include His-644, Asp-678, and Cys-743.

This sequence belongs to the peptidase C48 family.

It localises to the nucleus. It is found in the cytoplasm. Its subcellular location is the cytosol. Functionally, protease that catalyzes two essential functions in the smo-1 pathway: processing of full-length smo-1 to their mature forms and deconjugation of smo-1 from targeted proteins. May deconjugate smo-1 from the cadherin protein hmr-1 and plays a role in its recruitment to and the maintenance of adherens junctions. Required for epidermal morphogenesis during embryonic development. The sequence is that of Ubiquitin-like protease 2 from Caenorhabditis elegans.